Reading from the N-terminus, the 371-residue chain is Bifunctional enzyme IspD/IspF (371 aa).

Residues Met1–Ile210 form a 2-C-methyl-D-erythritol 4-phosphate cytidylyltransferase region. Residues Phe211–Leu371 are 2-C-methyl-D-erythritol 2,4-cyclodiphosphate synthase. A divalent metal cation is bound by residues Asp217 and His219. Residues Asp217–His219 and His243–Ser244 each bind 4-CDP-2-C-methyl-D-erythritol 2-phosphate. A divalent metal cation is bound at residue His251. 4-CDP-2-C-methyl-D-erythritol 2-phosphate contacts are provided by residues Asp265 to Gly267, Tyr270 to Asp274, Ala309 to Lys315, Thr341 to Glu344, Phe348, and Arg351.

In the N-terminal section; belongs to the IspD/TarI cytidylyltransferase family. IspD subfamily. It in the C-terminal section; belongs to the IspF family. A divalent metal cation is required as a cofactor.

The enzyme catalyses 2-C-methyl-D-erythritol 4-phosphate + CTP + H(+) = 4-CDP-2-C-methyl-D-erythritol + diphosphate. It catalyses the reaction 4-CDP-2-C-methyl-D-erythritol 2-phosphate = 2-C-methyl-D-erythritol 2,4-cyclic diphosphate + CMP. Its pathway is isoprenoid biosynthesis; isopentenyl diphosphate biosynthesis via DXP pathway; isopentenyl diphosphate from 1-deoxy-D-xylulose 5-phosphate: step 2/6. It participates in isoprenoid biosynthesis; isopentenyl diphosphate biosynthesis via DXP pathway; isopentenyl diphosphate from 1-deoxy-D-xylulose 5-phosphate: step 4/6. Functionally, bifunctional enzyme that catalyzes the formation of 4-diphosphocytidyl-2-C-methyl-D-erythritol from CTP and 2-C-methyl-D-erythritol 4-phosphate (MEP) (IspD), and catalyzes the conversion of 4-diphosphocytidyl-2-C-methyl-D-erythritol 2-phosphate (CDP-ME2P) to 2-C-methyl-D-erythritol 2,4-cyclodiphosphate (ME-CPP) with a corresponding release of cytidine 5-monophosphate (CMP) (IspF). The polypeptide is Bifunctional enzyme IspD/IspF (Campylobacter jejuni subsp. jejuni serotype O:2 (strain ATCC 700819 / NCTC 11168)).